A 79-amino-acid polypeptide reads, in one-letter code: ESX secretion system protein YukD (79 aa).

It belongs to the EsaB family.

In terms of biological role, required for YukE secretion. Probable component or regulator of the ESX/ESAT-6-like secretion system (BsEss). The polypeptide is ESX secretion system protein YukD (yukD) (Bacillus subtilis (strain 168)).